The sequence spans 496 residues: RNA-binding motif protein, Y chromosome, family 1 member F/J (496 aa).

In terms of domain architecture, RRM spans 8–85 (GKLFIGGLNR…KAIKVEQAKK (78 aa)). Disordered stretches follow at residues 81–345 (EQAK…YAPP) and 452–496 (KDQR…SSRY). Low complexity-rich tracts occupy residues 97 to 114 (PASS…SARG) and 149 to 159 (PVKRGPSSRSG). The span at 175–184 (NSWMGSQGPM) shows a compositional bias: polar residues. Composition is skewed to basic and acidic residues over residues 204 to 214 (RNDRMSTRHDG), 242 to 253 (DNGHSNRDEHSS), 276 to 289 (AYRD…DESY), 313 to 326 (GYRD…HESY), 335 to 345 (SSRETRDYAPP), and 484 to 496 (GESR…SSRY).

Interacts with splicing factor proteins SFRS3/SRP20, TRA2B/SFRS10, KHDRBS1/SAM68 and KHDRBS3. In terms of tissue distribution, testis-specific.

The protein resides in the nucleus. Functionally, RNA-binding protein which may be involved in spermatogenesis. Required for sperm development, possibly by participating in pre-mRNA splicing in the testis. The polypeptide is RNA-binding motif protein, Y chromosome, family 1 member F/J (RBMY1F) (Homo sapiens (Human)).